The sequence spans 345 residues: MADTDSFLHLARPLGPVAVGSAPTTAPLNVVIQPQAIFSILDHSLRRNADQERVIGTLLGTRSEDGTEVEIRSTFAVGHTETTDQVEVDMEYQKQMLALHLKANPKEVLVGWYATSSELNTFSALIQNFYSGQGDGTWPHPAVHLTVSTEAGKDIETRAYISAPVGVTAERAADSAAFIPVPYEIRYGEAEKSGLEAISSARDAENRATNIFTDIEALERAIEDVLGMIDRVSRYVESVIDEEAPASTALGQFLLNTLALAPKVEPADIERDFNNHIQDVLVVSYLANTIRTQMELSNRLATAQLTLGGESGGAESGAQRGQRGGKGGRGGQQRNQERGAEEARA.

Residues 30 to 166 (VVIQPQAIFS…TRAYISAPVG (137 aa)) enclose the MPN domain. Residues 308–345 (GGESGGAESGAQRGQRGGKGGRGGQQRNQERGAEEARA) form a disordered region. Gly residues predominate over residues 322–331 (QRGGKGGRGG). Residues 335-345 (NQERGAEEARA) show a composition bias toward basic and acidic residues.

This sequence belongs to the eIF-3 subunit F family. In terms of assembly, component of the eukaryotic translation initiation factor 3 (eIF-3) complex.

It localises to the cytoplasm. Functionally, component of the eukaryotic translation initiation factor 3 (eIF-3) complex, which is involved in protein synthesis of a specialized repertoire of mRNAs and, together with other initiation factors, stimulates binding of mRNA and methionyl-tRNAi to the 40S ribosome. The eIF-3 complex specifically targets and initiates translation of a subset of mRNAs involved in cell proliferation. In Aspergillus clavatus (strain ATCC 1007 / CBS 513.65 / DSM 816 / NCTC 3887 / NRRL 1 / QM 1276 / 107), this protein is Eukaryotic translation initiation factor 3 subunit F.